Here is a 510-residue protein sequence, read N- to C-terminus: UDP-N-acetylmuramoylalanine--D-glutamate ligase (510 aa).

An ATP-binding site is contributed by 138-144 (GTNGKTT). The segment at 294 to 316 (FDEPAPAPRRKKDAPPPTRAGGR) is disordered.

It belongs to the MurCDEF family.

Its subcellular location is the cytoplasm. It carries out the reaction UDP-N-acetyl-alpha-D-muramoyl-L-alanine + D-glutamate + ATP = UDP-N-acetyl-alpha-D-muramoyl-L-alanyl-D-glutamate + ADP + phosphate + H(+). The protein operates within cell wall biogenesis; peptidoglycan biosynthesis. Functionally, cell wall formation. Catalyzes the addition of glutamate to the nucleotide precursor UDP-N-acetylmuramoyl-L-alanine (UMA). The chain is UDP-N-acetylmuramoylalanine--D-glutamate ligase from Bordetella bronchiseptica (strain ATCC BAA-588 / NCTC 13252 / RB50) (Alcaligenes bronchisepticus).